Consider the following 63-residue polypeptide: GTNASMRKAFNYQEVSKTAGKNCANCAQFIPGASASAAGACKVIPGDSQIQPTGYCDAYIVKK.

Positions 23, 26, 41, and 56 each coordinate [4Fe-4S] cluster.

It belongs to the high-potential iron-sulfur protein (HiPIP) family. In terms of assembly, homodimer.

Functionally, specific class of high-redox-potential 4Fe-4S ferredoxins. Functions in anaerobic electron transport in most purple and in some other photosynthetic bacteria and in at least one genus (Paracoccus) of halophilic, denitrifying bacteria. In Rhodocyclus tenuis (Rhodospirillum tenue), this protein is High-potential iron-sulfur protein (hip).